The following is a 446-amino-acid chain: Eukaryotic translation initiation factor 3 subunit E (446 aa).

The region spanning 240–420 (PLFNDENSRE…GTVVMNHPNS (181 aa)) is the PCI domain.

This sequence belongs to the eIF-3 subunit E family. As to quaternary structure, component of the eukaryotic translation initiation factor 3 (eIF-3) complex.

It localises to the cytoplasm. Functionally, component of the eukaryotic translation initiation factor 3 (eIF-3) complex, which is involved in protein synthesis of a specialized repertoire of mRNAs and, together with other initiation factors, stimulates binding of mRNA and methionyl-tRNAi to the 40S ribosome. The eIF-3 complex specifically targets and initiates translation of a subset of mRNAs involved in cell proliferation. This chain is Eukaryotic translation initiation factor 3 subunit E, found in Pyricularia oryzae (strain 70-15 / ATCC MYA-4617 / FGSC 8958) (Rice blast fungus).